Reading from the N-terminus, the 277-residue chain is Bifunctional protein FolD (277 aa).

Residues 159–161 (GRS), Ser-184, and Ile-225 each bind NADP(+).

The protein belongs to the tetrahydrofolate dehydrogenase/cyclohydrolase family. As to quaternary structure, homodimer.

The enzyme catalyses (6R)-5,10-methylene-5,6,7,8-tetrahydrofolate + NADP(+) = (6R)-5,10-methenyltetrahydrofolate + NADPH. It carries out the reaction (6R)-5,10-methenyltetrahydrofolate + H2O = (6R)-10-formyltetrahydrofolate + H(+). Its pathway is one-carbon metabolism; tetrahydrofolate interconversion. In terms of biological role, catalyzes the oxidation of 5,10-methylenetetrahydrofolate to 5,10-methenyltetrahydrofolate and then the hydrolysis of 5,10-methenyltetrahydrofolate to 10-formyltetrahydrofolate. This chain is Bifunctional protein FolD, found in Acholeplasma laidlawii (strain PG-8A).